The sequence spans 244 residues: Probable transcriptional regulatory protein BT0025 (244 aa).

This sequence belongs to the TACO1 family.

It localises to the cytoplasm. The sequence is that of Probable transcriptional regulatory protein BT0025 from Borrelia turicatae (strain 91E135).